The sequence spans 475 residues: Ammonium transporter 2 (475 aa).

11 consecutive transmembrane segments (helical) span residues 27–47, 55–75, 120–140, 148–168, 183–203, 218–238, 254–274, 279–299, 302–322, 336–356, and 389–409; these read AATL…ASIV, SAFM…LLCY, LVYF…GSVL, WMAF…YSIW, GGYV…YWVG, VLLM…FNGG, TNLS…IFFG, IGAI…AGLI, WAAI…MMII, LAVF…TGLF, and AGAA…LLAI.

The protein belongs to the ammonia transporter channel (TC 1.A.11.2) family. In terms of tissue distribution, higher expression in shoots than roots.

The protein localises to the cell membrane. Functionally, high affinity ammonium transporter that may play an important role in moving ammonium between the apoplast and symplast of cells throughout the plant. Does not transport methylammonium. In Arabidopsis thaliana (Mouse-ear cress), this protein is Ammonium transporter 2 (AMT2).